The following is a 230-amino-acid chain: Phosphoglycerate mutase-like protein 4 (230 aa).

The active-site Tele-phosphohistidine intermediate is His-21. The active-site Proton donor/acceptor is Glu-96.

This sequence belongs to the phosphoglycerate mutase family.

May play a role in carbohydrates metabolism. The chain is Phosphoglycerate mutase-like protein 4 from Arabidopsis thaliana (Mouse-ear cress).